A 1072-amino-acid chain; its full sequence is Carbamoyl phosphate synthase large chain (1072 aa).

The tract at residues 1 to 401 (MPKRLDINTI…SLLKAVRSLE (401 aa)) is carboxyphosphate synthetic domain. Residues Arg129, Arg169, Gly175, Gly176, Lys208, Ile210, Glu215, Gly241, Val242, His243, Gln284, and Glu298 each contribute to the ATP site. The region spanning 133-327 (RTLMQELNEP…IAKLAAKIAV (195 aa)) is the ATP-grasp 1 domain. Mg(2+)-binding residues include Gln284, Glu298, and Asn300. Gln284, Glu298, and Asn300 together coordinate Mn(2+). The tract at residues 402 to 546 (LGIYHLELDH…YSTYADENEL (145 aa)) is oligomerization domain. Positions 547-929 (IVTDRKSVVV…ALYKGLVASG (383 aa)) are carbamoyl phosphate synthetic domain. Positions 671 to 861 (EAALTKLGIP…MANVATKVIL (191 aa)) constitute an ATP-grasp 2 domain. ATP is bound by residues Arg707, Arg746, Glu752, Gly777, Val778, His779, Ser780, Gln820, and Glu832. Gln820, Glu832, and Asn834 together coordinate Mg(2+). 3 residues coordinate Mn(2+): Gln820, Glu832, and Asn834. Residues 930–1072 (INIPTHGSVI…QTKRHEVVHA (143 aa)) enclose the MGS-like domain. Residues 930–1072 (INIPTHGSVI…QTKRHEVVHA (143 aa)) are allosteric domain.

Belongs to the CarB family. In terms of assembly, composed of two chains; the small (or glutamine) chain promotes the hydrolysis of glutamine to ammonia, which is used by the large (or ammonia) chain to synthesize carbamoyl phosphate. Tetramer of heterodimers (alpha,beta)4. Requires Mg(2+) as cofactor. The cofactor is Mn(2+).

It carries out the reaction hydrogencarbonate + L-glutamine + 2 ATP + H2O = carbamoyl phosphate + L-glutamate + 2 ADP + phosphate + 2 H(+). The enzyme catalyses hydrogencarbonate + NH4(+) + 2 ATP = carbamoyl phosphate + 2 ADP + phosphate + 2 H(+). It participates in amino-acid biosynthesis; L-arginine biosynthesis; carbamoyl phosphate from bicarbonate: step 1/1. It functions in the pathway pyrimidine metabolism; UMP biosynthesis via de novo pathway; (S)-dihydroorotate from bicarbonate: step 1/3. Functionally, large subunit of the glutamine-dependent carbamoyl phosphate synthetase (CPSase). CPSase catalyzes the formation of carbamoyl phosphate from the ammonia moiety of glutamine, carbonate, and phosphate donated by ATP, constituting the first step of 2 biosynthetic pathways, one leading to arginine and/or urea and the other to pyrimidine nucleotides. The large subunit (synthetase) binds the substrates ammonia (free or transferred from glutamine from the small subunit), hydrogencarbonate and ATP and carries out an ATP-coupled ligase reaction, activating hydrogencarbonate by forming carboxy phosphate which reacts with ammonia to form carbamoyl phosphate. In Bacillus anthracis (strain A0248), this protein is Carbamoyl phosphate synthase large chain.